Consider the following 124-residue polypeptide: Fluoride-specific ion channel FluC (124 aa).

4 helical membrane passes run 1-21 (MVPL…LRFA), 38-58 (TLAV…LFLI), 69-89 (GLMV…LDTV), and 99-119 (LALG…WAGL). Residues glycine 76 and threonine 79 each coordinate Na(+).

This sequence belongs to the fluoride channel Fluc/FEX (TC 1.A.43) family.

It localises to the cell inner membrane. It catalyses the reaction fluoride(in) = fluoride(out). Na(+) is not transported, but it plays an essential structural role and its presence is essential for fluoride channel function. Its function is as follows. Fluoride-specific ion channel. Important for reducing fluoride concentration in the cell, thus reducing its toxicity. In Pseudomonas fluorescens (strain Pf0-1), this protein is Fluoride-specific ion channel FluC.